The sequence spans 701 residues: Elongation factor G (701 aa).

The tr-type G domain occupies 11 to 287; that stretch reads SRVRNFGIMA…AVVDYLPSPL (277 aa). GTP-binding positions include 20-27, 84-88, and 138-141; these read AHIDAGKT, DTPGH, and NKMD.

It belongs to the TRAFAC class translation factor GTPase superfamily. Classic translation factor GTPase family. EF-G/EF-2 subfamily.

Its subcellular location is the cytoplasm. Catalyzes the GTP-dependent ribosomal translocation step during translation elongation. During this step, the ribosome changes from the pre-translocational (PRE) to the post-translocational (POST) state as the newly formed A-site-bound peptidyl-tRNA and P-site-bound deacylated tRNA move to the P and E sites, respectively. Catalyzes the coordinated movement of the two tRNA molecules, the mRNA and conformational changes in the ribosome. This is Elongation factor G (fusA) from Mycobacterium tuberculosis (strain CDC 1551 / Oshkosh).